A 331-amino-acid chain; its full sequence is Vacuolar protein sorting-associated protein 26B (331 aa).

The tract at residues 310-331 (AAQRYEGSNPEPTSAQAKEETD) is disordered.

The protein belongs to the VPS26 family. In terms of assembly, component of the heterotrimeric retromer cargo-selective complex (CSC) which is believed to associate with variable sorting nexins to form functionally distinct retromer complex variants.

The protein localises to the cytoplasm. Its subcellular location is the membrane. It localises to the endosome. Acts as a component of the retromer cargo-selective complex (CSC). The CSC is believed to be the core functional component of retromer or respective retromer complex variants acting to prevent missorting of selected transmembrane cargo proteins into the lysosomal degradation pathway. Retromer mediates retrograde transport of cargo proteins from endosomes to the trans-Golgi network (TGN). In Danio rerio (Zebrafish), this protein is Vacuolar protein sorting-associated protein 26B (vps26b).